Consider the following 284-residue polypeptide: Nucleoid occlusion protein (284 aa).

The segment at residues E143–L162 is a DNA-binding region (H-T-H motif).

The protein belongs to the ParB family.

The protein localises to the cytoplasm. It localises to the nucleoid. Effects nucleoid occlusion by binding relatively nonspecifically to DNA and preventing the assembly of the division machinery in the vicinity of the nucleoid, especially under conditions that disturb the cell cycle. It helps to coordinate cell division and chromosome segregation by preventing the formation of the Z ring through the nucleoid, which would cause chromosome breakage. The sequence is that of Nucleoid occlusion protein from Listeria monocytogenes serotype 4b (strain CLIP80459).